A 245-amino-acid chain; its full sequence is tRNA pseudouridine synthase A (245 aa).

Asp-52 (nucleophile) is an active-site residue. Tyr-111 is a substrate binding site.

Belongs to the tRNA pseudouridine synthase TruA family. Homodimer.

It catalyses the reaction uridine(38/39/40) in tRNA = pseudouridine(38/39/40) in tRNA. Formation of pseudouridine at positions 38, 39 and 40 in the anticodon stem and loop of transfer RNAs. This chain is tRNA pseudouridine synthase A, found in Rhodopseudomonas palustris (strain BisB18).